The primary structure comprises 180 residues: 3-hydroxyanthranilate 3,4-dioxygenase (180 aa).

R44 is a binding site for O2. Fe cation is bound by residues H48, E54, and H92. Substrate is bound at residue E54. Residues R96 and E106 each coordinate substrate. 4 residues coordinate a divalent metal cation: C121, C124, C158, and C161.

The protein belongs to the 3-HAO family. Requires Fe(2+) as cofactor.

The protein resides in the cytoplasm. It catalyses the reaction 3-hydroxyanthranilate + O2 = (2Z,4Z)-2-amino-3-carboxymuconate 6-semialdehyde. The protein operates within cofactor biosynthesis; NAD(+) biosynthesis; quinolinate from L-kynurenine: step 3/3. Catalyzes the oxidative ring opening of 3-hydroxyanthranilate to 2-amino-3-carboxymuconate semialdehyde, which spontaneously cyclizes to quinolinate. The polypeptide is 3-hydroxyanthranilate 3,4-dioxygenase (bna1) (Neurospora crassa (strain ATCC 24698 / 74-OR23-1A / CBS 708.71 / DSM 1257 / FGSC 987)).